We begin with the raw amino-acid sequence, 147 residues long: Deoxyuridine 5'-triphosphate nucleotidohydrolase (147 aa).

Substrate-binding positions include 63–65 (RSG), N76, and 80–82 (TID).

Belongs to the dUTPase family. Mg(2+) is required as a cofactor.

It carries out the reaction dUTP + H2O = dUMP + diphosphate + H(+). It functions in the pathway pyrimidine metabolism; dUMP biosynthesis; dUMP from dCTP (dUTP route): step 2/2. In terms of biological role, this enzyme is involved in nucleotide metabolism: it produces dUMP, the immediate precursor of thymidine nucleotides and it decreases the intracellular concentration of dUTP so that uracil cannot be incorporated into DNA. This Chlamydia caviae (strain ATCC VR-813 / DSM 19441 / 03DC25 / GPIC) (Chlamydophila caviae) protein is Deoxyuridine 5'-triphosphate nucleotidohydrolase.